Here is a 282-residue protein sequence, read N- to C-terminus: Formamidopyrimidine-DNA glycosylase (282 aa).

The active-site Schiff-base intermediate with DNA is P2. Catalysis depends on E3, which acts as the Proton donor. K58 serves as the catalytic Proton donor; for beta-elimination activity. DNA-binding residues include H96, R115, and K152. The FPG-type zinc-finger motif lies at 238–272 (HVYGRGGQPCERCGEEILKTVLGGRGTHYCPSCQN). R262 serves as the catalytic Proton donor; for delta-elimination activity.

Belongs to the FPG family. Monomer. Zn(2+) serves as cofactor.

It catalyses the reaction Hydrolysis of DNA containing ring-opened 7-methylguanine residues, releasing 2,6-diamino-4-hydroxy-5-(N-methyl)formamidopyrimidine.. It carries out the reaction 2'-deoxyribonucleotide-(2'-deoxyribose 5'-phosphate)-2'-deoxyribonucleotide-DNA = a 3'-end 2'-deoxyribonucleotide-(2,3-dehydro-2,3-deoxyribose 5'-phosphate)-DNA + a 5'-end 5'-phospho-2'-deoxyribonucleoside-DNA + H(+). In terms of biological role, involved in base excision repair of DNA damaged by oxidation or by mutagenic agents. Acts as a DNA glycosylase that recognizes and removes damaged bases. Has a preference for oxidized purines, such as 7,8-dihydro-8-oxoguanine (8-oxoG). Has AP (apurinic/apyrimidinic) lyase activity and introduces nicks in the DNA strand. Cleaves the DNA backbone by beta-delta elimination to generate a single-strand break at the site of the removed base with both 3'- and 5'-phosphates. This is Formamidopyrimidine-DNA glycosylase from Corynebacterium aurimucosum (strain ATCC 700975 / DSM 44827 / CIP 107346 / CN-1) (Corynebacterium nigricans).